We begin with the raw amino-acid sequence, 142 residues long: ATP synthase epsilon chain (142 aa).

It belongs to the ATPase epsilon chain family. F-type ATPases have 2 components, CF(1) - the catalytic core - and CF(0) - the membrane proton channel. CF(1) has five subunits: alpha(3), beta(3), gamma(1), delta(1), epsilon(1). CF(0) has three main subunits: a, b and c.

The protein resides in the cell inner membrane. Functionally, produces ATP from ADP in the presence of a proton gradient across the membrane. The sequence is that of ATP synthase epsilon chain from Shewanella oneidensis (strain ATCC 700550 / JCM 31522 / CIP 106686 / LMG 19005 / NCIMB 14063 / MR-1).